A 102-amino-acid polypeptide reads, in one-letter code: Large ribosomal subunit protein uL24 (102 aa).

The protein belongs to the universal ribosomal protein uL24 family. Part of the 50S ribosomal subunit.

In terms of biological role, one of two assembly initiator proteins, it binds directly to the 5'-end of the 23S rRNA, where it nucleates assembly of the 50S subunit. Functionally, one of the proteins that surrounds the polypeptide exit tunnel on the outside of the subunit. This is Large ribosomal subunit protein uL24 from Finegoldia magna (strain ATCC 29328 / DSM 20472 / WAL 2508) (Peptostreptococcus magnus).